The chain runs to 706 residues: SPX domain-containing membrane protein OsI_32082 (706 aa).

One can recognise an SPX domain in the interval 2-145 (VNFSNKLTKD…GYKFTDYYVR (144 aa)). The next 6 membrane-spanning stretches (helical) occupy residues 251 to 271 (MSLVLNLANTFLYMVNTYIVV), 281 to 301 (LGAAATACGAVIGSMAVAQVF), 318 to 338 (LLFSSVVLLLGNVMYAMAFDL), 340 to 359 (SLTILLLGRVLCGMGSARAV), 378 to 398 (AAFVSASALGMACGPALAGLL), and 414 to 434 (LPGWIMAFGWLVYLIWLWISF). The interval 475-498 (SEQDEEDDNGDEEHNETLSSSTTT) is disordered. Residues 476–488 (EQDEEDDNGDEEH) show a composition bias toward acidic residues. Helical transmembrane passes span 520-540 (LLIYFMLKYAMEILLAESSVV), 554-574 (VFLAVLGLSVLPVNAIVGTYI), 583-603 (ILVASEMALLAGVMLSFKLTV), 611-631 (VCSAVLTFVSAEVVEGVNLSL), and 678-698 (LLNATLLPALLVCVASIAATL).

Belongs to the major facilitator superfamily.

The protein resides in the membrane. The chain is SPX domain-containing membrane protein OsI_32082 from Oryza sativa subsp. indica (Rice).